A 254-amino-acid polypeptide reads, in one-letter code: DNA repair protein RecO (254 aa).

Belongs to the RecO family.

Its function is as follows. Involved in DNA repair and RecF pathway recombination. This is DNA repair protein RecO from Verminephrobacter eiseniae (strain EF01-2).